The following is a 555-amino-acid chain: Urocanate hydratase (555 aa).

NAD(+)-binding positions include Gly-52–Gly-53, Gln-130, Gly-176–Gly-178, Glu-196, Arg-201, Asn-242–Ala-243, Gln-263–His-267, Tyr-273–Leu-274, and Tyr-322. Cys-410 is a catalytic residue. Gly-492 contacts NAD(+).

This sequence belongs to the urocanase family. The cofactor is NAD(+).

Its subcellular location is the cytoplasm. It carries out the reaction 4-imidazolone-5-propanoate = trans-urocanate + H2O. Its pathway is amino-acid degradation; L-histidine degradation into L-glutamate; N-formimidoyl-L-glutamate from L-histidine: step 2/3. Catalyzes the conversion of urocanate to 4-imidazolone-5-propionate. In Shewanella baltica (strain OS155 / ATCC BAA-1091), this protein is Urocanate hydratase.